We begin with the raw amino-acid sequence, 455 residues long: MGQAAWKGFVLSLFDYKTAKFVVAKSKKVGLLYRVLQLIILLYLLIWVFLIKKSYQDIDTSLQSAVVTKVKGVAYTNTTMLGERLWDVADFVIPSQGENVFFVVTNLIVTPNQRQGICAEREGIPDGECSEDDDCHAGESVVAGHGLKTGRCLRVGNSTRGTCEIFAWCPVETKSMPTDPLLKDAESFTIFIKNFIRFPKFNFSKANVLETDNKHFLKTCHFSSTNLYCPIFRLGSIVRWAGADFQDIALKGGVIGIYIEWDCDLDKAASKCNPHYYFNRLDNKHTHSISSGYNFRFARYYRDPNGVEFRDLMKAYGIRFDVIVNGKAGKFSIIPTVINIGSGLALMGAGAFFCDLVLIYLIRKSEFYRDKKFEKVRGQKEDANVEVEANEMEQERPEDEPLERVRQDEQSQELAQSGRKQNSNCQVLLEPARFGLRENAIVNVKQSQILHPVKT.

Residues 1-34 (MGQAAWKGFVLSLFDYKTAKFVVAKSKKVGLLYR) lie on the Cytoplasmic side of the membrane. A helical transmembrane segment spans residues 35 to 55 (VLQLIILLYLLIWVFLIKKSY). At 56–341 (QDIDTSLQSA…SIIPTVINIG (286 aa)) the chain is on the extracellular side. ATP-binding residues include K69 and K71. N77 carries an N-linked (GlcNAc...) asparagine glycan. Intrachain disulfides connect C118/C169, C129/C152, and C135/C163. N157 is a glycosylation site (N-linked (GlcNAc...) asparagine). T189 serves as a coordination point for ATP. A glycan (N-linked (GlcNAc...) asparagine) is linked at N202. 2 cysteine pairs are disulfide-bonded: C220/C229 and C263/C272. 3 residues coordinate ATP: N294, R296, and K314. The helical transmembrane segment at 342 to 362 (SGLALMGAGAFFCDLVLIYLI) threads the bilayer. Topologically, residues 363–455 (RKSEFYRDKK…QSQILHPVKT (93 aa)) are cytoplasmic. The span at 384-401 (NVEVEANEMEQERPEDEP) shows a compositional bias: acidic residues. A disordered region spans residues 384 to 422 (NVEVEANEMEQERPEDEPLERVRQDEQSQELAQSGRKQN). The span at 412–422 (QELAQSGRKQN) shows a compositional bias: polar residues.

It belongs to the P2X receptor family. Functional P2XRs are organized as homomeric and heteromeric trimers. Homotrimer. Forms heterotrimer with P2RX1. As to expression, predominantly expressed in heart but are also present in brain, spinal cord and adrenal gland.

The protein localises to the cell membrane. The enzyme catalyses Na(+)(in) = Na(+)(out). It catalyses the reaction Ca(2+)(in) = Ca(2+)(out). The catalysed reaction is chloride(in) = chloride(out). With respect to regulation, activated by ATP. Slowly desensitizing. Not activated by ATP agonist alpha/beta-methylene-ATP. Highly sensitive to the antagonists suramin and PPADS. Functionally, ATP-gated nonselective transmembrane cation channel. Permeable to potassium, sodium and calcium. Unlike other P2RX receptors, the P2X5 receptor is also permeable to chloride. Acts as an important regulator of inflammatory-related bone loss and osteoclast multinucleation. The chain is P2X purinoceptor 5 (P2rx5) from Rattus norvegicus (Rat).